Here is a 55-residue protein sequence, read N- to C-terminus: Large ribosomal subunit protein bL33A (55 aa).

This sequence belongs to the bacterial ribosomal protein bL33 family.

The sequence is that of Large ribosomal subunit protein bL33A from Mycobacterium sp. (strain KMS).